The primary structure comprises 609 residues: NADH-ubiquinone oxidoreductase chain 5 (609 aa).

Helical transmembrane passes span 3–23 (VINL…LPIV), 46–66 (AFMI…EMII), 90–110 (MIFV…SMWY), 115–135 (PFIN…MILV), 140–160 (LFQL…LIGW), 174–194 (AVLY…WFLI), 216–236 (LMGL…HPWL), 244–264 (TPVS…FLLI), 276–296 (MQTT…ICAL), 304–323 (IIAF…IGIN), 328–350 (AFLH…GSII), 368–388 (VLPF…GMPF), 410–432 (WALL…IMFF), 460–480 (LLLG…PTST), 485–505 (MPYY…ILAL), and 585–605 (GLIK…LMMI).

It belongs to the complex I subunit 5 family.

It localises to the mitochondrion inner membrane. It carries out the reaction a ubiquinone + NADH + 5 H(+)(in) = a ubiquinol + NAD(+) + 4 H(+)(out). Its function is as follows. Core subunit of the mitochondrial membrane respiratory chain NADH dehydrogenase (Complex I) that is believed to belong to the minimal assembly required for catalysis. Complex I functions in the transfer of electrons from NADH to the respiratory chain. The immediate electron acceptor for the enzyme is believed to be ubiquinone. This is NADH-ubiquinone oxidoreductase chain 5 (MT-ND5) from Phoca vitulina (Harbor seal).